Reading from the N-terminus, the 269-residue chain is Regulatory protein RecX (269 aa).

It belongs to the RecX family.

Its subcellular location is the cytoplasm. Modulates RecA activity. The chain is Regulatory protein RecX from Lactococcus lactis subsp. cremoris (strain SK11).